The sequence spans 428 residues: Glutamine synthetase leaf isozyme, chloroplastic (428 aa).

Residues 1–49 (MAQILAPSIQCQTRITKTSPLATPISSKMWSSLVMKQNKKVARSAKFRV) constitute a chloroplast transit peptide. The GS beta-grasp domain occupies 75–155 (IIAEYIWIGG…VICDAYTPQG (81 aa)). A GS catalytic domain is found at 159-428 (PTNKRHKAAE…LAAQKIALKV (270 aa)).

It belongs to the glutamine synthetase family. In terms of assembly, homooctamer.

It is found in the plastid. Its subcellular location is the chloroplast. The enzyme catalyses L-glutamate + NH4(+) + ATP = L-glutamine + ADP + phosphate + H(+). Its function is as follows. The light-modulated chloroplast enzyme, encoded by a nuclear gene and expressed primarily in leaves, is responsible for the reassimilation of the ammonia generated by photorespiration. The chain is Glutamine synthetase leaf isozyme, chloroplastic (GS2) from Medicago sativa (Alfalfa).